Reading from the N-terminus, the 694-residue chain is Elongation factor G 2 (694 aa).

Residues Ser-5 to Thr-280 enclose the tr-type G domain. GTP-binding positions include Ala-14–Thr-21, Asp-78–His-82, and Asn-132–Asp-135.

The protein belongs to the TRAFAC class translation factor GTPase superfamily. Classic translation factor GTPase family. EF-G/EF-2 subfamily.

The protein localises to the cytoplasm. In terms of biological role, catalyzes the GTP-dependent ribosomal translocation step during translation elongation. During this step, the ribosome changes from the pre-translocational (PRE) to the post-translocational (POST) state as the newly formed A-site-bound peptidyl-tRNA and P-site-bound deacylated tRNA move to the P and E sites, respectively. Catalyzes the coordinated movement of the two tRNA molecules, the mRNA and conformational changes in the ribosome. The polypeptide is Elongation factor G 2 (Pseudoalteromonas translucida (strain TAC 125)).